The sequence spans 327 residues: MTEAEDFAQLLQKLQNASPALPEGTSSTPTPSSSTGLLPNGKKTKGRVKIKMEYINNKLRRYTTFSKRKTGIMKKAFELSTLTGTQVMLLVASETGHVYTYATPKLQPMISSDTGKAMIQSCLNAPGGDGSDVQPSRTEFTFDSGNGGNGMRKRKMLSDVMSAESSNNSPSMPNFTPFLAPSMAPLFSTFGEDDYNNDESGDDSDSEEASSDIKEEYQGSPTMVKQETTEIDSVTASLQQRIKEAMRQAASNKQAIKKAKITPPSSNMNNAAFLNPFLLQGGANASNLLATAARKGDDAGSLTSNPFLSMGLNLQQLIESAAIASNE.

The interval 12–43 (QKLQNASPALPEGTSSTPTPSSSTGLLPNGKK) is disordered. Low complexity predominate over residues 25–35 (TSSTPTPSSST). Positions 45–105 (KGRVKIKMEY…GHVYTYATPK (61 aa)) constitute an MADS-box domain. Positions 189–225 (TFGEDDYNNDESGDDSDSEEASSDIKEEYQGSPTMVK) are disordered. Positions 191 to 210 (GEDDYNNDESGDDSDSEEAS) are enriched in acidic residues.

Expressed in muscle, varying with age, decreasing twofold during the first week of adulthood.

Its subcellular location is the nucleus. Its function is as follows. Transcription factor. Regulates myogenesis, in cooperation with transcription factors hlh-1 and hnd-1. Required for maintenance of muscle in adulthood. The polypeptide is Serum response factor homolog (Caenorhabditis elegans).